The sequence spans 2399 residues: Norsolorinic acid synthase (2399 aa).

A starter unit:ACP transacylase (SAT) domain region spans residues 10–247 (LVFGDQTYDF…RQIPIYVPAH (238 aa)). The region spanning 372 to 805 (KSKLAIVSMS…GGNTALLIED (434 aa)) is the Ketosynthase family 3 (KS3) domain. Residues C544, H679, and H722 each act as for beta-ketoacyl synthase activity in the active site. Residues 905–1192 (FAFTGQGSQY…LCGMIKNILG (288 aa)) are malonyl-CoA:ACP transacylase (MAT) domain. The For acyl/malonyl transferase activity role is filled by S995. The segment at 1307 to 1327 (VQEAPAAKTETKKMSKLDPTK) is disordered. The segment covering 1315 to 1327 (TETKKMSKLDPTK) has biased composition (basic and acidic residues). Positions 1340–1483 (HKVIEEKTEP…CTVRFTTDSQ (144 aa)) are N-terminal hotdog fold. In terms of domain architecture, PKS/mFAS DH spans 1340–1658 (HKVIEEKTEP…LRSVPRKALR (319 aa)). The product template (PT) domain stretch occupies residues 1353 to 1658 (QFTVETDISR…LRSVPRKALR (306 aa)). The Proton acceptor; for dehydratase activity role is filled by H1372. Residues 1510–1658 (LTHYNTKSGY…LRSVPRKALR (149 aa)) form a C-terminal hotdog fold region. Catalysis depends on D1570, which acts as the Proton donor; for dehydratase activity. Residues 1665 to 1734 (MDKGIRQRGG…AALKASVPKA (70 aa)) form a disordered region. Residues 1677–1698 (GAAKGAVAAPAPAKKMVEPVKA) show a composition bias toward low complexity. Pro residues predominate over residues 1708–1723 (AAPPSPSKAAPPPAPK). Residues 1724 to 1734 (PAALKASVPKA) show a composition bias toward low complexity. 3 consecutive Carrier domains span residues 1733-1812 (KADP…AGAA), 1877-1953 (SKVF…GGSG), and 2020-2099 (VART…TGSS). 3 positions are modified to O-(pantetheine 4'-phosphoryl)serine: S1770, S1911, and S2057. Residues 2098-2115 (SSADSDSSSVASNPADPA) are compositionally biased toward low complexity. Residues 2098–2149 (SSADSDSSSVASNPADPAATPPRSESSDTEPDDEAPSKPKSGPGSTDSCRST) form a disordered region. Over residues 2140-2149 (PGSTDSCRST) the composition is skewed to polar residues. The thioesterase/Claisen cyclase (TE/CLC) domain stretch occupies residues 2164–2393 (TLFLLPDGGG…KARVNYVSDL (230 aa)). Catalysis depends on S2234, which acts as the For thioesterase activity.

Requires pantetheine 4'-phosphate as cofactor.

It catalyses the reaction hexanoyl-[ACP] + 7 malonyl-CoA + 6 H(+) = noranthrone + holo-[ACP] + 7 CO2 + 7 CoA + 2 H2O. It participates in mycotoxin biosynthesis. In terms of biological role, polyketide synthase; part of the fragmented gene cluster that mediates the biosynthesis of dothistromin (DOTH), a polyketide toxin very similar in structure to the aflatoxin precursor, versicolorin B. The first step of the pathway is the conversion of acetate to norsolorinic acid (NOR) and requires the fatty acid synthase subunits hexA and hexB, as well as the polyketide synthase pksA. PksA combines a hexanoyl starter unit and 7 malonyl-CoA extender units to synthesize the precursor NOR. The hexanoyl starter unit is provided to the acyl-carrier protein (ACP) domain by the fungal fatty acid synthase hexA/hexB. The second step is the conversion of NOR to averantin (AVN) and requires the norsolorinic acid ketoreductase nor1, which catalyzes the dehydration of norsolorinic acid to form (1'S)-averantin. The cytochrome P450 monooxygenase avnA then catalyzes the hydroxylation of AVN to 5'hydroxyaverantin (HAVN). The next step is performed by adhA that transforms HAVN to averufin (AVF). Averufin might then be converted to hydroxyversicolorone by cypX and avfA. Hydroxyversicolorone is further converted versiconal hemiacetal acetate (VHA) by moxY. VHA is then the substrate for the versiconal hemiacetal acetate esterase est1 to yield versiconal (VAL). Versicolorin B synthase vbsA then converts VAL to versicolorin B (VERB) by closing the bisfuran ring. Then, the activity of the versicolorin B desaturase verB leads to versicolorin A (VERA). DotB, a predicted chloroperoxidase, may perform epoxidation of the A-ring of VERA. Alternatively, a cytochrome P450, such as cypX or avnA could catalyze this step. It is also possible that another, uncharacterized, cytochrome P450 enzyme is responsible for this step. Opening of the epoxide could potentially be achieved by the epoxide hydrolase epoA. However, epoA seems not to be required for DOTH biosynthesis, but other epoxide hydrolases may have the ability to complement this hydrolysis. Alternatively, opening of the epoxide ring could be achieved non-enzymatically. The next step is the deoxygenation of ring A to yield the 5,8-dihydroxyanthraquinone which is most likely catalyzed by the NADPH dehydrogenase encoded by ver1. The last stages of DOTH biosynthesis are proposed to involve hydroxylation of the bisfuran. OrdB and norB might have oxidative roles here. An alternative possibility is that cytochrome P450 monoogenases such as avnA and cypX might perform these steps in addition to previously proposed steps. This Dothistroma septosporum (Red band needle blight fungus) protein is Norsolorinic acid synthase.